Reading from the N-terminus, the 237-residue chain is 2-C-methyl-D-erythritol 4-phosphate cytidylyltransferase (237 aa).

The protein belongs to the IspD/TarI cytidylyltransferase family. IspD subfamily.

It carries out the reaction 2-C-methyl-D-erythritol 4-phosphate + CTP + H(+) = 4-CDP-2-C-methyl-D-erythritol + diphosphate. It functions in the pathway isoprenoid biosynthesis; isopentenyl diphosphate biosynthesis via DXP pathway; isopentenyl diphosphate from 1-deoxy-D-xylulose 5-phosphate: step 2/6. In terms of biological role, catalyzes the formation of 4-diphosphocytidyl-2-C-methyl-D-erythritol from CTP and 2-C-methyl-D-erythritol 4-phosphate (MEP). In Paraburkholderia xenovorans (strain LB400), this protein is 2-C-methyl-D-erythritol 4-phosphate cytidylyltransferase.